We begin with the raw amino-acid sequence, 232 residues long: Lipopolysaccharide core heptose(II) kinase WaaY (232 aa).

It belongs to the protein kinase superfamily. RfaY/WaaY family.

The enzyme catalyses alpha-D-Glc-(1-&gt;3)-[L-alpha-D-Hep-(1-&gt;7)]-L-alpha-D-Hep-(1-&gt;3)-4-O-PO3(2-)-L-alpha-D-Hep-(1-&gt;5)-[alpha-Kdo-(2-&gt;4)]-alpha-Kdo-(2-&gt;6)-lipid A + ATP = alpha-D-Glc-(1-&gt;3)-[L-alpha-D-Hep-(1-&gt;7)]-4-O-PO3(2-)-L-alpha-D-Hep-(1-&gt;3)-4-O-PO3(2-)-L-alpha-D-Hep-(1-&gt;5)-[alpha-Kdo-(2-&gt;4)]-alpha-Kdo-(2-&gt;6)-lipid A + ADP + H(+). The protein operates within bacterial outer membrane biogenesis; LPS core biosynthesis. In terms of biological role, kinase involved in the biosynthesis of the core oligosaccharide region of lipopolysaccharide (LPS). Catalyzes the phosphorylation of the second heptose unit (HepII) of the inner core. The sequence is that of Lipopolysaccharide core heptose(II) kinase WaaY from Escherichia coli (strain K12).